Here is a 178-residue protein sequence, read N- to C-terminus: Large ribosomal subunit protein uL6 (178 aa).

This sequence belongs to the universal ribosomal protein uL6 family. As to quaternary structure, part of the 50S ribosomal subunit.

In terms of biological role, this protein binds to the 23S rRNA, and is important in its secondary structure. It is located near the subunit interface in the base of the L7/L12 stalk, and near the tRNA binding site of the peptidyltransferase center. The chain is Large ribosomal subunit protein uL6 from Ligilactobacillus salivarius (strain UCC118) (Lactobacillus salivarius).